Reading from the N-terminus, the 360-residue chain is Homoserine O-succinyltransferase (360 aa).

Residue cysteine 146 is the Acyl-thioester intermediate of the active site. Lysine 167 and serine 196 together coordinate substrate. The Proton acceptor role is filled by histidine 239. Glutamate 241 is an active-site residue. Arginine 253 is a substrate binding site.

This sequence belongs to the MetA family.

Its subcellular location is the cytoplasm. The enzyme catalyses L-homoserine + succinyl-CoA = O-succinyl-L-homoserine + CoA. It participates in amino-acid biosynthesis; L-methionine biosynthesis via de novo pathway; O-succinyl-L-homoserine from L-homoserine: step 1/1. In terms of biological role, transfers a succinyl group from succinyl-CoA to L-homoserine, forming succinyl-L-homoserine. In vitro, can also use glutaryl-CoA as acyl donor. The polypeptide is Homoserine O-succinyltransferase (Thiothrix nivea (strain ATCC 35100 / DSM 5205 / JP2)).